A 505-amino-acid chain; its full sequence is Maturase K (505 aa).

It belongs to the intron maturase 2 family. MatK subfamily.

The protein localises to the plastid. The protein resides in the chloroplast. Its function is as follows. Usually encoded in the trnK tRNA gene intron. Probably assists in splicing its own and other chloroplast group II introns. The polypeptide is Maturase K (Barclaya longifolia (Orchid lily)).